Reading from the N-terminus, the 346-residue chain is Protein RecA (346 aa).

67-74 (GPESSGKT) serves as a coordination point for ATP.

The protein belongs to the RecA family.

It localises to the cytoplasm. Can catalyze the hydrolysis of ATP in the presence of single-stranded DNA, the ATP-dependent uptake of single-stranded DNA by duplex DNA, and the ATP-dependent hybridization of homologous single-stranded DNAs. It interacts with LexA causing its activation and leading to its autocatalytic cleavage. The protein is Protein RecA of Saccharopolyspora erythraea (strain ATCC 11635 / DSM 40517 / JCM 4748 / NBRC 13426 / NCIMB 8594 / NRRL 2338).